Here is a 346-residue protein sequence, read N- to C-terminus: Putative D-alanine--D-lactate ligase (346 aa).

Positions 137–338 (YVVARSAGIA…LSEVIDRTLS (202 aa)) constitute an ATP-grasp domain. Residue 163–216 (RLTYPVFVKPARSGSSFGVSKVCRPEDLATAVESARRYDTKVLIEAAVVGSEVG) coordinates ATP. Mg(2+) is bound by residues aspartate 292, glutamate 305, and asparagine 307.

It belongs to the D-alanine--D-alanine ligase family. Mg(2+) is required as a cofactor. Requires Mn(2+) as cofactor.

The protein resides in the cell membrane. Required for resistance to glycopeptides antibiotics. D-Ala--D-Ala ligase of altered specificity which catalyzes ester bond formation between D-Ala and various D-hydroxy acids; producing a peptidoglycan which does not terminate by D-alanine but by D-lactate, thus preventing vancomycin binding. The sequence is that of Putative D-alanine--D-lactate ligase from Streptomyces coelicolor (strain ATCC BAA-471 / A3(2) / M145).